A 93-amino-acid polypeptide reads, in one-letter code: Phosphoribosyl-ATP pyrophosphatase (93 aa).

It belongs to the PRA-PH family.

It localises to the cytoplasm. It catalyses the reaction 1-(5-phospho-beta-D-ribosyl)-ATP + H2O = 1-(5-phospho-beta-D-ribosyl)-5'-AMP + diphosphate + H(+). Its pathway is amino-acid biosynthesis; L-histidine biosynthesis; L-histidine from 5-phospho-alpha-D-ribose 1-diphosphate: step 2/9. The sequence is that of Phosphoribosyl-ATP pyrophosphatase from Rhodococcus jostii (strain RHA1).